Here is a 349-residue protein sequence, read N- to C-terminus: Inhibitor of nuclear factor kappa-B kinase-interacting protein (349 aa).

Residues 1–11 (MSEVKSRKKSG) are compositionally biased toward basic residues. The interval 1-39 (MSEVKSRKKSGTKGAPAEPGKRNEGGKSPEARGGGGRGW) is disordered. Basic and acidic residues predominate over residues 19–30 (PGKRNEGGKSPE). A helical membrane pass occupies residues 45–61 (GVSLLSLGTCLGLAWFV). N-linked (GlcNAc...) asparagine glycosylation is present at Asn-145. Coiled-coil stretches lie at residues 183–216 (GLVT…IGDL) and 304–347 (IGRL…HISD). The N-linked (GlcNAc...) asparagine glycan is linked to Asn-327.

Post-translationally, N-glycosylated.

The protein localises to the endoplasmic reticulum membrane. In terms of biological role, target of p53/TP53 with pro-apoptotic function. The protein is Inhibitor of nuclear factor kappa-B kinase-interacting protein (IKBIP) of Bos taurus (Bovine).